The sequence spans 145 residues: 3-dehydroquinate dehydratase (145 aa).

Y23 functions as the Proton acceptor in the catalytic mechanism. 3 residues coordinate substrate: N73, H79, and D86. The active-site Proton donor is H99. Substrate contacts are provided by residues 100-101 (LS) and R110.

Belongs to the type-II 3-dehydroquinase family. Homododecamer.

The enzyme catalyses 3-dehydroquinate = 3-dehydroshikimate + H2O. It functions in the pathway metabolic intermediate biosynthesis; chorismate biosynthesis; chorismate from D-erythrose 4-phosphate and phosphoenolpyruvate: step 3/7. Catalyzes a trans-dehydration via an enolate intermediate. The chain is 3-dehydroquinate dehydratase from Desulfitobacterium hafniense (strain Y51).